A 498-amino-acid polypeptide reads, in one-letter code: Glycerol kinase (498 aa).

T12 provides a ligand contact to ADP. 3 residues coordinate ATP: T12, T13, and S14. T12 contributes to the sn-glycerol 3-phosphate binding site. Residue R16 participates in ADP binding. 4 residues coordinate sn-glycerol 3-phosphate: R82, E83, Y134, and D244. Residues R82, E83, Y134, D244, and Q245 each contribute to the glycerol site. Positions 266 and 310 each coordinate ADP. 4 residues coordinate ATP: T266, G310, Q314, and G411. The ADP site is built by G411 and N415.

This sequence belongs to the FGGY kinase family.

It carries out the reaction glycerol + ATP = sn-glycerol 3-phosphate + ADP + H(+). It functions in the pathway polyol metabolism; glycerol degradation via glycerol kinase pathway; sn-glycerol 3-phosphate from glycerol: step 1/1. Inhibited by fructose 1,6-bisphosphate (FBP). Key enzyme in the regulation of glycerol uptake and metabolism. Catalyzes the phosphorylation of glycerol to yield sn-glycerol 3-phosphate. The polypeptide is Glycerol kinase (Chloroflexus aggregans (strain MD-66 / DSM 9485)).